Reading from the N-terminus, the 120-residue chain is Guanidine hydrolase-activating protein A (120 aa).

Residues His2, Glu3, and Glu41 each coordinate Ni(2+). Zn(2+) contacts are provided by Cys74, Cys77, Cys91, and Cys94.

The protein belongs to the HypA/HybF family.

Involved in the maturation of the nickel-dependent guanidine hydrolase GdmH. Required for nickel insertion into the metal center of GdmH. Seems to be required only for GdmH activation and not for activity. The polypeptide is Guanidine hydrolase-activating protein A (Synechocystis sp. (strain ATCC 27184 / PCC 6803 / Kazusa)).